Consider the following 533-residue polypeptide: Glucose-6-phosphate isomerase (533 aa).

Residue Glu322 is the Proton donor of the active site. Catalysis depends on residues His351 and Lys455.

It belongs to the GPI family.

It localises to the cytoplasm. It catalyses the reaction alpha-D-glucose 6-phosphate = beta-D-fructose 6-phosphate. It functions in the pathway carbohydrate biosynthesis; gluconeogenesis. The protein operates within carbohydrate degradation; glycolysis; D-glyceraldehyde 3-phosphate and glycerone phosphate from D-glucose: step 2/4. Functionally, catalyzes the reversible isomerization of glucose-6-phosphate to fructose-6-phosphate. The protein is Glucose-6-phosphate isomerase of Desulfitobacterium hafniense (strain DSM 10664 / DCB-2).